Consider the following 466-residue polypeptide: F-box/LRR-repeat protein fbxl-1 (466 aa).

An F-box domain is found at 54–100 (SLINRVLPKEVLLKVFSFLDTKALCRSAQVCRSWSILALDGSNWQRV). LRR repeat units lie at residues 122-147 (GGFL…FTSR), 148-173 (CPNL…LGRY), 174-199 (CHKL…IGDG), 200-225 (CPNL…ILSN), 226-251 (CKSL…VEAH), 252-277 (MGAI…IANG), 278-303 (ATAL…LGQH), 304-329 (SHNL…LARG), 330-355 (CRQL…LANN), 356-381 (CTAL…LASK), and 408-433 (CKAL…FQHH).

In terms of assembly, component of the SCF (SKP1-CUL1-F-box protein)-type E3 ubiquitin ligase complex. Expressed in neuroglial cells such as the socket cell and sheath cell, neurosecretory motor neurons and regions around the pharynx and anus.

The protein resides in the perikaryon. The protein localises to the cell projection. Its subcellular location is the dendrite. It localises to the cilium. It is found in the axon. Functionally, substrate-recognition component of the SCF (SKP1-CUL1-F-box protein)-type E3 ubiquitin ligase complex. Plays a role in regulating the entry into the dauer state. In hermaphrodites, may play a role in modulating the rate of defecation. This Caenorhabditis elegans protein is F-box/LRR-repeat protein fbxl-1.